Reading from the N-terminus, the 43-residue chain is VTCDLLSFEAKGFAANHSICAAHCLVIGRKGGACQNGVCVCRN.

3 cysteine pairs are disulfide-bonded: cysteine 3–cysteine 34, cysteine 20–cysteine 39, and cysteine 24–cysteine 41.

Its subcellular location is the secreted. Functionally, antibacterial protein. Strong activity against the Gram-positive bacteria M.luteus, B.megaterium and S.aureus. Reduced activity against Gram-positive bacterium B.subtilis and weak activity against Gram-negative bacterium X.japonicus. No detectable activity against the Gram-negative bacteria E.asbriae, E.coli, P.aeruginosa and S.marcescens. In Anomala cuprea (Cupreous chafer beetle), this protein is Defensin-B.